Here is a 208-residue protein sequence, read N- to C-terminus: MTEEMQYEYLVPLEKYLSAGVRLGTRLSNKYLEDRGFIFAVRPDGLRIFDIKKIDERLKIAAKFIARYRPERVLVHTTRPYGFKPVQMFCKFVGCKALTGRFIPGTLTNPNLPHYQEVDLLFVVDPKLDAQAVAEAAKMGIPVIALVDTDTPHQYIDFMIPCNNKGRKSLALIFWILARQVLRERGELKPDQDLPVPPEEFETKLVQS.

A disordered region spans residues 189 to 208 (KPDQDLPVPPEEFETKLVQS).

This sequence belongs to the universal ribosomal protein uS2 family.

The polypeptide is Small ribosomal subunit protein uS2 (rps2) (Pyrobaculum aerophilum (strain ATCC 51768 / DSM 7523 / JCM 9630 / CIP 104966 / NBRC 100827 / IM2)).